Reading from the N-terminus, the 147-residue chain is D-aminoacyl-tRNA deacylase (147 aa).

Positions 136 to 137 (GP) match the Gly-cisPro motif, important for rejection of L-amino acids motif.

It belongs to the DTD family. As to quaternary structure, homodimer.

It localises to the cytoplasm. It catalyses the reaction glycyl-tRNA(Ala) + H2O = tRNA(Ala) + glycine + H(+). The catalysed reaction is a D-aminoacyl-tRNA + H2O = a tRNA + a D-alpha-amino acid + H(+). In terms of biological role, an aminoacyl-tRNA editing enzyme that deacylates mischarged D-aminoacyl-tRNAs. Also deacylates mischarged glycyl-tRNA(Ala), protecting cells against glycine mischarging by AlaRS. Acts via tRNA-based rather than protein-based catalysis; rejects L-amino acids rather than detecting D-amino acids in the active site. By recycling D-aminoacyl-tRNA to D-amino acids and free tRNA molecules, this enzyme counteracts the toxicity associated with the formation of D-aminoacyl-tRNA entities in vivo and helps enforce protein L-homochirality. The chain is D-aminoacyl-tRNA deacylase from Streptococcus suis (strain 98HAH33).